We begin with the raw amino-acid sequence, 142 residues long: Large ribosomal subunit protein uL11 (142 aa).

Belongs to the universal ribosomal protein uL11 family. Part of the ribosomal stalk of the 50S ribosomal subunit. Interacts with L10 and the large rRNA to form the base of the stalk. L10 forms an elongated spine to which L12 dimers bind in a sequential fashion forming a multimeric L10(L12)X complex. One or more lysine residues are methylated.

Its function is as follows. Forms part of the ribosomal stalk which helps the ribosome interact with GTP-bound translation factors. The chain is Large ribosomal subunit protein uL11 from Acinetobacter baylyi (strain ATCC 33305 / BD413 / ADP1).